A 739-amino-acid chain; its full sequence is Protein NPGR2 (739 aa).

Residues 32–71 (EQMRHREEEDKKSEVGVGRDYNGSSALSTAESENAKKLDN) are disordered. Basic and acidic residues predominate over residues 33–45 (QMRHREEEDKKSE). A compositionally biased stretch (polar residues) spans 53–63 (NGSSALSTAES). 9 TPR repeats span residues 90–127 (EEAR…KMKT), 162–195 (FEAI…VETS), 215–248 (TKAV…HWKL), 465–498 (PRVV…GAES), 500–533 (LEVW…TGKW), 536–569 (GKLL…LQVQ), 592–625 (LGTW…APYS), 626–659 (SVRY…DPMH), and 697–733 (HSAW…EETM).

Interacts with calmodulin in a calcium-dependent manner. As to expression, expressed in pollen, flowers and fruits.

The polypeptide is Protein NPGR2 (Arabidopsis thaliana (Mouse-ear cress)).